Here is a 493-residue protein sequence, read N- to C-terminus: Flagellin (493 aa).

The protein belongs to the bacterial flagellin family.

It is found in the secreted. The protein resides in the bacterial flagellum. Functionally, flagellin is the subunit protein which polymerizes to form the filaments of bacterial flagella. This chain is Flagellin (fliC), found in Salmonella rubislaw.